Reading from the N-terminus, the 420-residue chain is uncharacterized protein (420 aa).

The next 6 helical transmembrane spans lie at 26–46 (IFLL…QSVI), 66–86 (SAIK…WFTF), 231–251 (VILA…ATVL), 276–296 (IPVN…PSLL), 317–337 (GFLV…SIAF), and 369–389 (IDIL…FLTI).

The protein belongs to the CbiQ family.

It localises to the cell membrane. This is an uncharacterized protein from Mycoplasma genitalium (strain ATCC 33530 / DSM 19775 / NCTC 10195 / G37) (Mycoplasmoides genitalium).